Consider the following 431-residue polypeptide: Adenylosuccinate synthetase (431 aa).

GTP is bound by residues 12-18 (GDEGKGK) and 40-42 (GHT). D13 (proton acceptor) is an active-site residue. The Mg(2+) site is built by D13 and G40. Residues 13–16 (DEGK), 38–41 (NAGH), T129, R143, Q224, T239, and R303 each bind IMP. H41 (proton donor) is an active-site residue. Residue 299–305 (VTTGRAR) participates in substrate binding. Residues R305, 331–333 (KLD), and 413–415 (GVG) each bind GTP.

The protein belongs to the adenylosuccinate synthetase family. In terms of assembly, homodimer. Mg(2+) serves as cofactor.

It localises to the cytoplasm. The enzyme catalyses IMP + L-aspartate + GTP = N(6)-(1,2-dicarboxyethyl)-AMP + GDP + phosphate + 2 H(+). The protein operates within purine metabolism; AMP biosynthesis via de novo pathway; AMP from IMP: step 1/2. Plays an important role in the de novo pathway of purine nucleotide biosynthesis. Catalyzes the first committed step in the biosynthesis of AMP from IMP. The chain is Adenylosuccinate synthetase from Mycolicibacterium vanbaalenii (strain DSM 7251 / JCM 13017 / BCRC 16820 / KCTC 9966 / NRRL B-24157 / PYR-1) (Mycobacterium vanbaalenii).